The chain runs to 450 residues: tRNA-2-methylthio-N(6)-dimethylallyladenosine synthase (450 aa).

Residues 14–132 (GEFFIETWGC…FPNYLNEVKK (119 aa)) enclose the MTTase N-terminal domain. Positions 23, 59, 93, 169, 173, and 176 each coordinate [4Fe-4S] cluster. The region spanning 155 to 385 (RKNSMKAFVT…VEVVNEISAK (231 aa)) is the Radical SAM core domain. The TRAM domain occupies 388-450 (KAYEGKIEEV…NSFSLTGEEI (63 aa)).

The protein belongs to the methylthiotransferase family. MiaB subfamily. Monomer. The cofactor is [4Fe-4S] cluster.

Its subcellular location is the cytoplasm. The enzyme catalyses N(6)-dimethylallyladenosine(37) in tRNA + (sulfur carrier)-SH + AH2 + 2 S-adenosyl-L-methionine = 2-methylsulfanyl-N(6)-dimethylallyladenosine(37) in tRNA + (sulfur carrier)-H + 5'-deoxyadenosine + L-methionine + A + S-adenosyl-L-homocysteine + 2 H(+). Functionally, catalyzes the methylthiolation of N6-(dimethylallyl)adenosine (i(6)A), leading to the formation of 2-methylthio-N6-(dimethylallyl)adenosine (ms(2)i(6)A) at position 37 in tRNAs that read codons beginning with uridine. This chain is tRNA-2-methylthio-N(6)-dimethylallyladenosine synthase, found in Clostridium botulinum (strain Langeland / NCTC 10281 / Type F).